The chain runs to 568 residues: Urease subunit alpha (568 aa).

The region spanning 130–568 (GGIDTHIHFI…LPMAQRYFLF (439 aa)) is the Urease domain. Ni(2+) is bound by residues His135, His137, and Lys218. Lys218 carries the N6-carboxylysine modification. His220 contacts substrate. Ni(2+)-binding residues include His247 and His273. Residue His321 is the Proton donor of the active site. Asp361 provides a ligand contact to Ni(2+).

The protein belongs to the metallo-dependent hydrolases superfamily. Urease alpha subunit family. In terms of assembly, heterotrimer of UreA (gamma), UreB (beta) and UreC (alpha) subunits. Three heterotrimers associate to form the active enzyme. It depends on Ni cation as a cofactor. Post-translationally, carboxylation allows a single lysine to coordinate two nickel ions.

The protein resides in the cytoplasm. The catalysed reaction is urea + 2 H2O + H(+) = hydrogencarbonate + 2 NH4(+). Its pathway is nitrogen metabolism; urea degradation; CO(2) and NH(3) from urea (urease route): step 1/1. This Burkholderia ambifaria (strain ATCC BAA-244 / DSM 16087 / CCUG 44356 / LMG 19182 / AMMD) (Burkholderia cepacia (strain AMMD)) protein is Urease subunit alpha.